We begin with the raw amino-acid sequence, 90 residues long: Large ribosomal subunit protein bL27 (90 aa).

The disordered stretch occupies residues 1–21 (MASKKAGGSTRNGRDSEAKRL).

It belongs to the bacterial ribosomal protein bL27 family.

This Neisseria meningitidis serogroup C (strain 053442) protein is Large ribosomal subunit protein bL27.